An 823-amino-acid chain; its full sequence is Nuclear pore complex protein Nup93-1 (823 aa).

The protein belongs to the nucleoporin interacting component (NIC) family. Part of the nuclear pore complex (NPC). Interacts with msk (via C-terminus); this association might be facilitated by Nup75. Interacts with Mad (preferentially when phosphorylated). Interacts with Nup154 (via N-terminus). Interacts with the Polycomb group (PcG) proteins Pc and E(z).

The protein resides in the nucleus membrane. It is found in the nucleus. Its subcellular location is the nuclear pore complex. It localises to the nucleoplasm. Its function is as follows. Required for nuclear pore complex assembly, maintenance and function. Required for nuclear import of phosphorylated Mad via importin msk. Has no role in classical nuclear localization signal (cNLS)-dependent nuclear import via importin-beta. Mediates the association between the nuclear pore complex and a subclass of silenced regions bound by Polycomb group (PcG) proteins, enables long-range interactions between Polycomb loci and contributes to repression of polycomb targets. Together with Nup62 and Nup154, contributes to karyosome morphology and chromatin organization including attachment to the nuclear envelope in oocytes and nurse cells. The protein is Nuclear pore complex protein Nup93-1 of Drosophila melanogaster (Fruit fly).